The primary structure comprises 209 residues: MEQPRKAVVVTGFGPFGEHTVNASWIAVQELEKLGLGDSVDLHVYEIPVEYQTVQRLIPALWEKHSPQLVVHVGVSGMATTVTLEKCGHNKGYKGLDNCRFCPGSQCCVEDGPESIDSIIDMDAVCKRVTTLGLDVSVTISQDAGRYLCDFTYYTSLYQGRGRSAFVHVPPLGKPYNADQLGRALRAIIEEMLGVLEQAEGDISCCRQL.

Active-site residues include E85, C149, and H168.

It belongs to the peptidase C15 family. As to quaternary structure, monomer.

The protein localises to the cytoplasm. It catalyses the reaction Release of an N-terminal pyroglutamyl group from a polypeptide, the second amino acid generally not being Pro.. In terms of biological role, removes 5-oxoproline from various penultimate amino acid residues except L-proline. The polypeptide is Pyroglutamyl-peptidase 1 (Pgpep1) (Mus musculus (Mouse)).